Here is an 895-residue protein sequence, read N- to C-terminus: Serine-rich coiled-coil domain-containing protein 1 (895 aa).

Disordered regions lie at residues M1–S142, S154–T177, E332–G394, and R459–M497. Residues S43 to T56 show a composition bias toward low complexity. The span at T83–K102 shows a compositional bias: polar residues. The segment covering L131–S142 has biased composition (basic and acidic residues). A compositionally biased stretch (polar residues) spans S348–N358. Residues M675–A705 adopt a coiled-coil conformation. The disordered stretch occupies residues Q731–K753.

It belongs to the CCSER family.

In Mus musculus (Mouse), this protein is Serine-rich coiled-coil domain-containing protein 1 (Ccser1).